Here is a 104-residue protein sequence, read N- to C-terminus: MVNIPKTRNTFCKKCKGYSAHKVSQAKKSKDNPRAQGNRRYARKQRGYGGQTKPILRRKAKVTKKLVLNLECTKCKFSHQKPLKRAKHVIFGGERKRKGEALVY.

Residues 22–56 (KVSQAKKSKDNPRAQGNRRYARKQRGYGGQTKPIL) are disordered.

Belongs to the eukaryotic ribosomal protein eL42 family.

The polypeptide is Large ribosomal subunit protein eL42 (RPL44) (Encephalitozoon cuniculi (strain GB-M1) (Microsporidian parasite)).